We begin with the raw amino-acid sequence, 1201 residues long: Autophagy-related protein 11 (1201 aa).

The tract at residues 90-109 (FPFLGRPSTPTKGSDNSTGT) is disordered. Polar residues predominate over residues 97 to 109 (STPTKGSDNSTGT). Residues 418 to 452 (LLRSDDMVRSLRDEKSKLEEKVKGSESRIRKLEDL) are a coiled coil. 2 disordered regions span residues 458 to 503 (HMGR…SEEK) and 525 to 545 (KLQK…QEVQ). Positions 485-499 (RRSSVSSRRMSSNQS) are enriched in low complexity. The span at 525–542 (KLQKDAHAERQSNTDKIQ) shows a compositional bias: basic and acidic residues. Coiled coils occupy residues 566–670 (RRFL…ALQA) and 710–828 (SAKA…WKER). 2 disordered regions span residues 1052 to 1076 (SMNG…DDEN) and 1115 to 1201 (DARG…LQGP). A compositionally biased stretch (polar residues) spans 1133 to 1166 (RTLSKSLDSRRNSSNSKKGPATPSQRGNDSTTDL). Residues 1191–1201 (EEVRRDQLQGP) are compositionally biased toward basic and acidic residues.

Belongs to the ATG11 family. Homodimer and potential homooligomers.

The protein resides in the preautophagosomal structure membrane. In terms of biological role, selective autophagy-specific protein required for pexophagy and mitophagy. In contrast to its Saccharomyces cerevisiae ATG11 ortholog, is not involved in non-selective autophagy nor in cytoplasm to vacuole transport (Cvt). The polypeptide is Autophagy-related protein 11 (Aspergillus oryzae (strain ATCC 42149 / RIB 40) (Yellow koji mold)).